The sequence spans 140 residues: ATP synthase epsilon chain (140 aa).

The protein belongs to the ATPase epsilon chain family. In terms of assembly, F-type ATPases have 2 components, CF(1) - the catalytic core - and CF(0) - the membrane proton channel. CF(1) has five subunits: alpha(3), beta(3), gamma(1), delta(1), epsilon(1). CF(0) has three main subunits: a, b and c.

The protein localises to the cell inner membrane. Functionally, produces ATP from ADP in the presence of a proton gradient across the membrane. This is ATP synthase epsilon chain from Neisseria meningitidis serogroup C (strain 053442).